Reading from the N-terminus, the 189-residue chain is 3-hydroxyanthranilate 3,4-dioxygenase (189 aa).

Arg-49 serves as a coordination point for O2. His-53, Glu-59, and His-97 together coordinate Fe cation. Glu-59 serves as a coordination point for substrate. Substrate-binding residues include Arg-101 and Glu-112. Fe cation is bound by residues Cys-127, Cys-130, Cys-165, and Cys-168.

The protein belongs to the 3-HAO family. As to quaternary structure, homodimer. Requires Fe(2+) as cofactor.

It catalyses the reaction 3-hydroxyanthranilate + O2 = (2Z,4Z)-2-amino-3-carboxymuconate 6-semialdehyde. The protein operates within cofactor biosynthesis; NAD(+) biosynthesis; quinolinate from L-kynurenine: step 3/3. Catalyzes the oxidative ring opening of 3-hydroxyanthranilate to 2-amino-3-carboxymuconate semialdehyde, which spontaneously cyclizes to quinolinate. The polypeptide is 3-hydroxyanthranilate 3,4-dioxygenase (Cupriavidus pinatubonensis (strain JMP 134 / LMG 1197) (Cupriavidus necator (strain JMP 134))).